The chain runs to 243 residues: MYNVKLEVFEGPFDLLFHLIEKNEIDLMDIPISVILDQYMEYIKTLQEMDLNVASEFIVMAATLLEIKSKMLLPKQKFEGQQLEMEEVDPREELVTKLIEYKKYKIIAQTFKEMCKIGSRFFREEPEVKYIDKKIAFNYSSEDIYKAYLKVISKNNAKEDEIEIKKDEYTVESKIKELLVKLVKKTVLWFSEFIKKSRAKGEIIVSFIAVLELVRLNKIIAEQKTTYGDILIKSFGRGEKNEQ.

This sequence belongs to the ScpA family. Component of a cohesin-like complex composed of ScpA, ScpB and the Smc homodimer, in which ScpA and ScpB bind to the head domain of Smc. The presence of the three proteins is required for the association of the complex with DNA.

It localises to the cytoplasm. In terms of biological role, participates in chromosomal partition during cell division. May act via the formation of a condensin-like complex containing Smc and ScpB that pull DNA away from mid-cell into both cell halves. The protein is Segregation and condensation protein A of Thermoanaerobacter pseudethanolicus (strain ATCC 33223 / 39E) (Clostridium thermohydrosulfuricum).